We begin with the raw amino-acid sequence, 592 residues long: Glycosyltransferase 25 family member (592 aa).

The N-terminal stretch at 1 to 13 (MLALLLTTTIVSG) is a signal peptide. N-linked (GlcNAc...) asparagine glycans are attached at residues asparagine 249 and asparagine 510. 2 stretches are compositionally biased toward basic and acidic residues: residues 552–563 (RIQEPKKGDKEQ) and 579–592 (GEHD…RSEL). Residues 552–592 (RIQEPKKGDKEQLPNAPALLSESGIGQGEHDLETKNRRSEL) are disordered. The short motif at 589–592 (RSEL) is the Prevents secretion from ER element.

Belongs to the glycosyltransferase 25 family.

Its subcellular location is the endoplasmic reticulum lumen. The chain is Glycosyltransferase 25 family member from Anopheles gambiae (African malaria mosquito).